A 305-amino-acid chain; its full sequence is Maximins-S type B/C (305 aa).

Residues 1–18 (MNFNYFILVLFFITSGHA) form the signal peptide. 2 consecutive propeptides follow at residues 19–35 (KSETREVHQEAENHIKR) and 52–65 (SAEEQNLAEHLVTR). Position 83 is an asparagine amide (Asn83). Residues 87 to 100 (SAEEQDLAEHLVTR) constitute a propeptide that is removed on maturation. The residue at position 118 (Asn118) is an Asparagine amide. Residues 122–135 (SAEEQDLAEDLVTR) constitute a propeptide that is removed on maturation. Position 153 is a lysine amide (Lys153). A propeptide spanning residues 157–170 (SAEDQDLAEDLVTR) is cleaved from the precursor. Asparagine amide is present on Asn188. The propeptide occupies 192–205 (SAEEQDLAEHLVTR). An Asparagine amide modification is found at Asn223. Residues 227–240 (SAEEQDLSEDLVTR) constitute a propeptide that is removed on maturation. An Asparagine amide modification is found at Asn258. Residues 262-275 (SAEEQDLVEDLVTR) constitute a propeptide that is removed on maturation. The residue at position 293 (Lys293) is a Lysine amide. Residues 297–305 (SAEQEKDMK) constitute a propeptide that is removed on maturation.

It belongs to the maximin-S family. Expressed by the skin dorsal glands.

Its subcellular location is the secreted. Maximin-S1 has no antimicrobial activity. Has no hemolytic activity. Functionally, maximin-S2 has an activity against mycoplasma but has no activity against common Gram-positive and Gram-negative bacteria nor fungi. Has no hemolytic activity. In terms of biological role, maximin-S3 has an activity against mycoplasma but has no activity against common Gram-positive and Gram-negative bacteria nor fungi. Has no hemolytic activity. Its function is as follows. Maximin-S4 has an activity against mycoplasma but has no activity against common Gram-positive and Gram-negative bacteria nor fungi. Has no hemolytic activity. Maximin-S5 has an activity against mycoplasma but has no activity against common Gram-positive and Gram-negative bacteria nor fungi. Has no hemolytic activity. In Bombina maxima (Giant fire-bellied toad), this protein is Maximins-S type B/C.